Consider the following 75-residue polypeptide: UPF0235 protein Mvan_2846 (75 aa).

Belongs to the UPF0235 family.

This chain is UPF0235 protein Mvan_2846, found in Mycolicibacterium vanbaalenii (strain DSM 7251 / JCM 13017 / BCRC 16820 / KCTC 9966 / NRRL B-24157 / PYR-1) (Mycobacterium vanbaalenii).